The following is a 442-amino-acid chain: D-serine dehydratase 1 (442 aa).

Position 118 is an N6-(pyridoxal phosphate)lysine (Lys118).

It belongs to the serine/threonine dehydratase family. DsdA subfamily. In terms of assembly, monomer. Requires pyridoxal 5'-phosphate as cofactor.

It carries out the reaction D-serine = pyruvate + NH4(+). This is D-serine dehydratase 1 from Escherichia coli (strain UTI89 / UPEC).